The sequence spans 270 residues: Malonyl-[acyl-carrier protein] O-methyltransferase (270 aa).

It belongs to the methyltransferase superfamily.

It catalyses the reaction malonyl-[ACP] + S-adenosyl-L-methionine = malonyl-[ACP] methyl ester + S-adenosyl-L-homocysteine. It participates in cofactor biosynthesis; biotin biosynthesis. In terms of biological role, converts the free carboxyl group of a malonyl-thioester to its methyl ester by transfer of a methyl group from S-adenosyl-L-methionine (SAM). It allows to synthesize pimeloyl-ACP via the fatty acid synthetic pathway. This chain is Malonyl-[acyl-carrier protein] O-methyltransferase, found in Marinomonas sp. (strain MWYL1).